A 400-amino-acid polypeptide reads, in one-letter code: Large envelope protein (400 aa).

The residue at position 1 (Met1) is an N-acetylmethionine. Gly2 carries N-myristoyl glycine; by host lipidation. The tract at residues 2-119 is pre-S1; that stretch reads GAPLSTTRRG…PPLRDTHPQA (118 aa). The interval 2 to 174 is pre-S; sequence GAPLSTTRRG…FSKTGGPAMN (173 aa). Topologically, residues 2–181 are virion surface; in external conformation; sequence GAPLSTTRRG…AMNMDNITSG (180 aa). Residues 2 to 253 lie on the Intravirion; in internal conformation side of the membrane; the sequence is GAPLSTTRRG…PGYRWMCLRR (252 aa). Residue Pro4 is glycosylated (N-linked (GlcNAc...) asparagine). The interval 84 to 117 is disordered; it reads VLTTLPADPPPASTNRRSGRKPTPVSPPLRDTHP. Positions 120-174 are pre-S2; sequence MQWNSTQFHQALLDPRVRALYFPAGGSSSGTQNPAPTIASLTSSIFSKTGGPAMN. Residues 182–202 form a helical membrane-spanning segment; that stretch reads LLGPLLVLQAVCFLLTKILTI. Over 203–253 the chain is Intravirion; in external conformation; that stretch reads PQSLDSWWTSLNFLGGLPGCPGQNSQSPTSNHLPTSCPPTCPGYRWMCLRR. A helical membrane pass occupies residues 254-274; that stretch reads FIIFLFILLLCLIFLLVLLDY. Over 275 to 348 the chain is Virion surface; it reads QGMLPVCPLL…WASARFSWLS (74 aa). A glycan (N-linked (GlcNAc...) asparagine; by host) is linked at Asn320. Residues 349–369 form a helical membrane-spanning segment; that stretch reads LLVQFVQWCVGLSPTVWLLVI. Residues 370–375 are Intravirion-facing; sequence WMIWYW. The chain crosses the membrane as a helical span at residues 376–398; that stretch reads GPNLCSILSPFIPLLPIFCYLWV. Topologically, residues 399–400 are virion surface; that stretch reads SI.

The protein belongs to the orthohepadnavirus major surface antigen family. As to quaternary structure, in its internal form (Li-HBsAg), interacts with the capsid protein and with the isoform S. Interacts with host chaperone CANX. Associates with host chaperone CANX through its pre-S2 N glycan; this association may be essential for isoform M proper secretion. In terms of assembly, interacts with isoform L. Interacts with the antigens of satellite virus HDV (HDVAgs); this interaction is required for encapsidation of HDV genomic RNA. Isoform M is N-terminally acetylated by host at a ratio of 90%, and N-glycosylated by host at the pre-S2 region. Post-translationally, myristoylated.

It localises to the virion membrane. The large envelope protein exists in two topological conformations, one which is termed 'external' or Le-HBsAg and the other 'internal' or Li-HBsAg. In its external conformation the protein attaches the virus to cell receptors and thereby initiating infection. This interaction determines the species specificity and liver tropism. This attachment induces virion internalization predominantly through caveolin-mediated endocytosis. The large envelope protein also assures fusion between virion membrane and endosomal membrane. In its internal conformation the protein plays a role in virion morphogenesis and mediates the contact with the nucleocapsid like a matrix protein. In terms of biological role, the middle envelope protein plays an important role in the budding of the virion. It is involved in the induction of budding in a nucleocapsid independent way. In this process the majority of envelope proteins bud to form subviral lipoprotein particles of 22 nm of diameter that do not contain a nucleocapsid. The polypeptide is Large envelope protein (Hepatitis B virus genotype F2 (isolate Brazil/w4B) (HBV-F)).